Consider the following 533-residue polypeptide: Neuropilin and tolloid-like protein 1 (533 aa).

The first 22 residues, 1 to 22 (MIYGRSLFHIIASLIILHSSGA), serve as a signal peptide directing secretion. Over 23-344 (TKKGTEKQIT…LDQLTNTSGT (322 aa)) the chain is Extracellular. Disulfide bonds link Cys-41/Cys-68, Cys-96/Cys-118, Cys-172/Cys-202, Cys-229/Cys-251, Cys-292/Cys-304, Cys-299/Cys-317, and Cys-311/Cys-326. CUB domains are found at residues 41-155 (CGTW…YNFT) and 172-287 (CEFE…FTSF). In terms of domain architecture, LDL-receptor class A spans 291 to 327 (PCEGNTFFCHSNMCINNTLVCNGLQNCVYPWDENHCK). Asn-306 carries an N-linked (GlcNAc...) asparagine glycan. The N-linked (GlcNAc...) asparagine glycan is linked to Asn-340. A helical transmembrane segment spans residues 345–365 (VIGVTSCIVIILIIVSVIVQI). The Cytoplasmic portion of the chain corresponds to 366–533 (KQPRKKYVQR…HESEYNTTRV (168 aa)). A Phosphotyrosine modification is found at Tyr-417. A PDZ-binding motif is present at residues 531-533 (TRV).

In terms of assembly, interacts with PLZ domains of DLG2, DLG3 and DLG4 via its C-terminal TRV domain. Interacts with GRIN2A and GRIN2B via its CUB domains. As to expression, expressed only in brain. Present throughout the central nervous system. Highly expressed in the hippocampal CA3 region, olfactory bulb and tubercle, caudate putamen, and neocortex in the adult brain.

It is found in the membrane. The protein resides in the postsynaptic density membrane. Functionally, involved in the development and/or maintenance of neuronal circuitry. Accessory subunit of the neuronal N-methyl-D-aspartate receptor (NMDAR) critical for maintaining the abundance of GRIN2A-containing NMDARs in the postsynaptic density. Regulates long-term NMDA receptor-dependent synaptic plasticity and cognition, at least in the context of spatial learning and memory. This Mus musculus (Mouse) protein is Neuropilin and tolloid-like protein 1 (Neto1).